The chain runs to 757 residues: Mitofusin-2 (757 aa).

Topologically, residues 1–604 (MSLLFSRCNS…TQEELMVSMV (604 aa)) are cytoplasmic. Positions 30 to 94 (KHFVTAKKKI…VRGISEVLAR (65 aa)) are part of a helix bundle domain, formed by helices from N-terminal and C-terminal regions. The region spanning 93–342 (ARRHMKVAFF…VRMFEFQNFE (250 aa)) is the Dynamin-type G domain. A G1 motif region spans residues 103 to 110 (GRTSNGKS). 106-111 (SNGKST) is a GTP binding site. Threonine 111 bears the Phosphothreonine; by PINK1 mark. The segment at 129-130 (TT) is G2 motif. A G3 motif region spans residues 199–202 (DSPG). 258 to 261 (NRWD) contacts GTP. The tract at residues 258–261 (NRWD) is G4 motif. Position 288 (glutamate 288) is a region of interest, G5 motif. Positions 305 and 307 each coordinate GTP. Residues 359–385 (EQHTVRAKQIAEAVRLIMDSLHIAAQE) form a part of a helix bundle domain, formed by helices from N-terminal and C-terminal regions region. A coiled-coil region spans residues 406 to 434 (KQLELLAQDYKLRIKQITEEVERQVSTAM). Phosphoserine is present on serine 442. The chain crosses the membrane as a helical span at residues 605-625 (TGLASLTSRTSMGILVVGGVV). Tryptophan 626 is a topological domain (mitochondrial intermembrane). Residues 627–647 (KAVGWRLIALSFGLYGLLYVY) traverse the membrane as a helical segment. Residues 648–757 (ERLTWTTKAK…FTHQYLQPSR (110 aa)) lie on the Cytoplasmic side of the membrane. Residues 696–738 (FAHLCQQVDITRDNLEQEIAAMNKKVEALDSLQSRAKLLRNKA) are a coiled coil. Residues 722-753 (EALDSLQSRAKLLRNKAGWLDSELNMFTHQYL) are part of a helix bundle domain, formed by helices from N-terminal and C-terminal regions.

It belongs to the TRAFAC class dynamin-like GTPase superfamily. Dynamin/Fzo/YdjA family. Mitofusin subfamily. In terms of assembly, forms homomultimers and heteromultimers with MFN1. Oligomerization is essential for mitochondrion fusion. Interacts with VAT1. Interacts with STOML2; may form heterooligomers. Interacts (phosphorylated) with PRKN. Interacts with EIF2AK3. Interacts with THG1L; THG1L probably functions as a guanyl-nucleotide exchange factor/GEF, activating MFN2. Post-translationally, phosphorylated by PINK1. Ubiquitinated by non-degradative ubiquitin by PRKN, promoting mitochondrial fusion; deubiquitination by USP30 inhibits mitochondrial fusion. Ubiquitinated by HUWE1 when dietary stearate (C18:0) levels are low; ubiquitination inhibits mitochondrial fusion. Ubiquitous. Expression is markedly reduced in ApoE-knockout mouse atherosclerotic arteries.

Its subcellular location is the mitochondrion outer membrane. It carries out the reaction GTP + H2O = GDP + phosphate + H(+). Mitochondrial outer membrane GTPase that mediates mitochondrial clustering and fusion. Mitochondria are highly dynamic organelles, and their morphology is determined by the equilibrium between mitochondrial fusion and fission events. Overexpression induces the formation of mitochondrial networks. Membrane clustering requires GTPase activity and may involve a major rearrangement of the coiled coil domains. Plays a central role in mitochondrial metabolism and may be associated with obesity and/or apoptosis processes. Plays an important role in the regulation of vascular smooth muscle cell proliferation. Involved in the clearance of damaged mitochondria via selective autophagy (mitophagy). Is required for PRKN recruitment to dysfunctional mitochondria. Involved in the control of unfolded protein response (UPR) upon ER stress including activation of apoptosis and autophagy during ER stress. Acts as an upstream regulator of EIF2AK3 and suppresses EIF2AK3 activation under basal conditions. In Mus musculus (Mouse), this protein is Mitofusin-2 (Mfn2).